The primary structure comprises 251 residues: Hydroxyacylglutathione hydrolase (251 aa).

The Zn(2+) site is built by His-53, His-55, Asp-57, His-58, His-110, Asp-127, and His-165.

Belongs to the metallo-beta-lactamase superfamily. Glyoxalase II family. Monomer. Zn(2+) is required as a cofactor.

It catalyses the reaction an S-(2-hydroxyacyl)glutathione + H2O = a 2-hydroxy carboxylate + glutathione + H(+). Its pathway is secondary metabolite metabolism; methylglyoxal degradation; (R)-lactate from methylglyoxal: step 2/2. Functionally, thiolesterase that catalyzes the hydrolysis of S-D-lactoyl-glutathione to form glutathione and D-lactic acid. The protein is Hydroxyacylglutathione hydrolase of Edwardsiella ictaluri (strain 93-146).